Consider the following 295-residue polypeptide: Cyclic dipyrimidine nucleotide synthase CdnE (295 aa).

A disordered region spans residues 1–25 (MSIDWEQTFRKWSKPSSETESTKAE). Residues Gln51, Ser53, and Asn59 each coordinate UTP. Residues Asp65 and Asp67 each contribute to the Mg(2+) site. Residues Asp67, Asp124, and Lys125 each coordinate UTP. Residues Asp128 and Asp139 each contribute to the Mg(2+) site. Asp139, Asn173, Lys201, and Ser220 together coordinate UTP. The Pyrimidine specificity motif (R/Q)xW in donor pocket motif lies at 274 to 276 (QMW).

The protein belongs to the CD-NTase family. E02 subfamily. The cofactor is Mg(2+).

It catalyses the reaction 2 UTP = c-di-UMP + 2 diphosphate. The enzyme catalyses UTP + CTP = cyclic CMP-UMP + 2 diphosphate. Its function is as follows. Cyclic nucleotide synthase (second messenger synthase) of a CBASS antivirus system. CBASS (cyclic oligonucleotide-based antiphage signaling system) provides immunity against bacteriophage. The CD-NTase protein synthesizes cyclic nucleotides in response to infection; these serve as specific second messenger signals. The signals activate a diverse range of effectors, leading to bacterial cell death and thus abortive phage infection. A type I-B(UU) CBASS system. Functionally, cyclic dinucleotide synthase that catalyzes the synthesis of 3',3'-cyclic UMP-UMP (c-di-UMP) as the major product, and of 3',3'-cyclic CMP-UMP as a minor product, which are second messengers for cell signal transduction. In Legionella pneumophila, this protein is Cyclic dipyrimidine nucleotide synthase CdnE.